The chain runs to 593 residues: ATPase family AAA domain-containing protein 3-B (593 aa).

3 disordered regions span residues 1 to 64 (MSWL…LDQS), 109 to 129 (EEKR…AQYQ), and 145 to 164 (QLQN…KQEA). The Mitochondrial intermembrane portion of the chain corresponds to 1 to 242 (MSWLFGLNRG…FRTFISDWDK (242 aa)). Residues 12 to 27 (PEPPGVPGFPEPPSPP) show a composition bias toward pro residues. Basic and acidic residues-rich tracts occupy residues 33–44 (GGDKNRPKDKWS), 53–64 (RAAKAARELDQS), 109–121 (EEKR…ETKQ), and 150–164 (ENLR…KQEA). A coiled-coil region spans residues 51 to 215 (LERAAKAARE…QIRLKAAEHR (165 aa)). The chain crosses the membrane as a helical span at residues 243–260 (VTATVAGLTLLAVGVYTA). Residues 261–593 (KNGTGVAGRY…LQPLLEGTPV (333 aa)) lie on the Mitochondrial matrix side of the membrane. ATP is bound at residue 348-355 (GPPGTGKT). Basic and acidic residues predominate over residues 570–580 (AEGKESTKEIG). Residues 570–593 (AEGKESTKEIGKNPLQPLLEGTPV) are disordered.

It belongs to the AAA ATPase family. Can form homooligomers. Homodimer formation at the N-terminus may be regulated by ATP and is required for the interaction with the inner surface of the mitochondrial outer membrane and correct mitochondrial homeostasis.

The protein localises to the mitochondrion inner membrane. Its subcellular location is the mitochondrion matrix. It localises to the mitochondrion nucleoid. The enzyme catalyses ATP + H2O = ADP + phosphate + H(+). Its function is as follows. Essential for mitochondrial network organization, mitochondrial metabolism and cell growth at organism and cellular level. May play an important role in mitochondrial protein synthesis. May also participate in mitochondrial DNA replication. May bind to mitochondrial DNA D-loops and contribute to nucleoid stability. Required for enhanced channeling of cholesterol for hormone-dependent steroidogenesis. Involved in mitochondrial-mediated antiviral innate immunity. Required to protect mitochondria from the PERK-mediated unfolded protein response: specifically inhibits the activity of EIF2AK3/PERK at mitochondria-endoplasmic reticulum contact sites, thereby providing a safe haven for mitochondrial protein translation during endoplasmic reticulum stress. Ability to inhibit EIF2AK3/PERK is independent of its ATPase activity. Also involved in the mitochondrial DNA damage response by promoting signaling between damaged genomes and the mitochondrial membrane, leading to activation of the integrated stress response (ISR). The protein is ATPase family AAA domain-containing protein 3-B (atad3-b) of Xenopus laevis (African clawed frog).